The sequence spans 176 residues: Prepronociceptin (176 aa).

The signal sequence occupies residues 1 to 19 (MKVLLCDLLLLSLFSSVFS). 2 consecutive propeptides follow at residues 20–95 (SCQR…MQHL) and 169–176 (TLHQNGNV).

It belongs to the opioid neuropeptide precursor family. In terms of processing, specific enzymatic cleavages at paired basic residues probably yield other active peptides besides nociceptin. The N-terminal domain contains 6 conserved cysteines thought to be involved in disulfide bonding and/or processing. In terms of tissue distribution, predominantly expressed in the brain and spinal cord. Also expressed and secreted by peripheral blood neutrophils following degranulation.

It localises to the secreted. In terms of biological role, ligand of the opioid receptor-like receptor OPRL1. It may act as a transmitter in the brain by modulating nociceptive and locomotor behavior. May be involved in neuronal differentiation and development. Its function is as follows. Blocks nociceptin action in pain transmission by inhibiting nociceptin-induced hyperalgesia and allodynia. Functionally, has potent analgesic activity. The protein is Prepronociceptin (PNOC) of Homo sapiens (Human).